The chain runs to 359 residues: MSYRRELEKYRDLDEDEILGALTEEELRTLENELDELDPDNALLPAGLRQKDQTTKAPTGPFKREELLDHLEKQAKEFKDREDLVPYTGEKRGKVWVPKQKPLDPVLESVTLEPELEEALANASDAELCDIAAILGMHTLMSNQQYYQALSSSSIMNKEGLNSVIKPTQYKPVPDEEPNSTDVEETLERIKNNDPKLEEVNLNNIRNIPIPTLKAYAEALKENSYVKKFSIVGTRSNDPVAYALAEMLKENKVLKTLNVESNFISGAGILRLVEALPYNTSLVEMKIDNQSQPLGNKVEMEIVSMLEKNATLLKFGYHFTQQGPRLRASNAMMNNNDLVRKRRLADLTGPIIPKCRSGV.

Residues 36–61 (ELDPDNALLPAGLRQKDQTTKAPTGP) form a disordered region. Residues 39 to 138 (PDNALLPAGL…CDIAAILGMH (100 aa)) are tropomyosin-binding.

This sequence belongs to the tropomodulin family. As to quaternary structure, binds to the N-terminus of tropomyosin and to actin. Interacts with FLII. In terms of tissue distribution, highly expressed in the erythrocyte, heart and skeletal muscle.

The protein resides in the cytoplasm. Its subcellular location is the cytoskeleton. Its function is as follows. Blocks the elongation and depolymerization of the actin filaments at the pointed end. The Tmod/TM complex contributes to the formation of the short actin protofilament, which in turn defines the geometry of the membrane skeleton. May play an important role in regulating the organization of actin filaments by preferentially binding to a specific tropomyosin isoform at its N-terminus. This Homo sapiens (Human) protein is Tropomodulin-1 (TMOD1).